We begin with the raw amino-acid sequence, 505 residues long: Glutamyl-tRNA(Gln) amidotransferase subunit A, mitochondrial (505 aa).

Catalysis depends on charge relay system residues Lys-76 and Ser-158. Catalysis depends on Ser-182, which acts as the Acyl-ester intermediate.

Belongs to the amidase family. GatA subfamily. As to quaternary structure, subunit of the heterotrimeric GatCAB amidotransferase (AdT) complex, composed of A, B and C subunits.

The protein localises to the mitochondrion. It carries out the reaction L-glutamyl-tRNA(Gln) + L-glutamine + ATP + H2O = L-glutaminyl-tRNA(Gln) + L-glutamate + ADP + phosphate + H(+). In terms of biological role, allows the formation of correctly charged Gln-tRNA(Gln) through the transamidation of misacylated Glu-tRNA(Gln) in the mitochondria. The reaction takes place in the presence of glutamine and ATP through an activated gamma-phospho-Glu-tRNA(Gln). This chain is Glutamyl-tRNA(Gln) amidotransferase subunit A, mitochondrial, found in Ixodes scapularis (Black-legged tick).